Here is a 256-residue protein sequence, read N- to C-terminus: Trans-aconitate 2-methyltransferase (256 aa).

It belongs to the methyltransferase superfamily. Tam family.

The protein resides in the cytoplasm. It carries out the reaction trans-aconitate + S-adenosyl-L-methionine = (E)-3-(methoxycarbonyl)pent-2-enedioate + S-adenosyl-L-homocysteine. Catalyzes the S-adenosylmethionine monomethyl esterification of trans-aconitate. The polypeptide is Trans-aconitate 2-methyltransferase (Rhizobium leguminosarum bv. trifolii (strain WSM2304)).